The following is a 429-amino-acid chain: Adenylosuccinate synthetase (429 aa).

Residues 12 to 18 (GDEGKGK) and 40 to 42 (GHT) contribute to the GTP site. Aspartate 13 functions as the Proton acceptor in the catalytic mechanism. Mg(2+) is bound by residues aspartate 13 and glycine 40. IMP contacts are provided by residues 13-16 (DEGK), 38-41 (NAGH), threonine 128, arginine 142, glutamine 223, threonine 238, and arginine 302. Catalysis depends on histidine 41, which acts as the Proton donor. A substrate-binding site is contributed by 298–304 (VNTGRKR). GTP contacts are provided by residues arginine 304, 330–332 (KLD), and 412–414 (GVG).

Belongs to the adenylosuccinate synthetase family. As to quaternary structure, homodimer. Requires Mg(2+) as cofactor.

It localises to the cytoplasm. The catalysed reaction is IMP + L-aspartate + GTP = N(6)-(1,2-dicarboxyethyl)-AMP + GDP + phosphate + 2 H(+). It participates in purine metabolism; AMP biosynthesis via de novo pathway; AMP from IMP: step 1/2. Its function is as follows. Plays an important role in the de novo pathway of purine nucleotide biosynthesis. Catalyzes the first committed step in the biosynthesis of AMP from IMP. This is Adenylosuccinate synthetase from Corynebacterium glutamicum (strain R).